We begin with the raw amino-acid sequence, 260 residues long: MLDKVKNVIVVLSGKGGVGKSTVSTQLSLALRKNGFKVGLLDIDLCGPSVPYLLGLEGRDIFQCDEGWVPVYTDESQTLAVMSIGFLLKNREDPVIWRGPKKTMMIRQFLTDVRWDELDYLIIDTPPGTSDEHITVMECLKEVGCHGAIIVTTPQEVALDDVRKEITFCKKTGINILGIVENMSGFVCPHCTSCTNIFSSNGGVSLATYAQVPHLGTLPIDPRVGVLAGTTTSVLDELPDSTTAEVLTHLVEKLKTMLVS.

14-21 (GKGGVGKS) contacts ATP. The [4Fe-4S] cluster site is built by C188 and C191.

This sequence belongs to the Mrp/NBP35 ATP-binding proteins family. NUBP2/CFD1 subfamily. Heterotetramer of 2 Nubp1 and 2 Nubp2 chains. Requires [4Fe-4S] cluster as cofactor.

The protein localises to the cytoplasm. Its function is as follows. Component of the cytosolic iron-sulfur (Fe/S) protein assembly (CIA) machinery. Required for maturation of extramitochondrial Fe-S proteins. The Nubp1-Nubp2 heterotetramer forms a Fe-S scaffold complex, mediating the de novo assembly of an Fe-S cluster and its transfer to target apoproteins. The chain is Cytosolic Fe-S cluster assembly factor Nubp2 homolog from Drosophila sechellia (Fruit fly).